The chain runs to 392 residues: Galactokinase (392 aa).

A substrate-binding site is contributed by 33–36 (EHTD). ATP is bound by residues Ser-67 and 129 to 135 (GSGLSSS). Mg(2+) contacts are provided by Ser-135 and Glu-167. Asp-179 acts as the Proton acceptor in catalysis. A substrate-binding site is contributed by Tyr-229.

This sequence belongs to the GHMP kinase family. GalK subfamily.

Its subcellular location is the cytoplasm. The catalysed reaction is alpha-D-galactose + ATP = alpha-D-galactose 1-phosphate + ADP + H(+). Its pathway is carbohydrate metabolism; galactose metabolism. In terms of biological role, catalyzes the transfer of the gamma-phosphate of ATP to D-galactose to form alpha-D-galactose-1-phosphate (Gal-1-P). This chain is Galactokinase, found in Limosilactobacillus reuteri (strain DSM 20016) (Lactobacillus reuteri).